A 1035-amino-acid chain; its full sequence is Retinoblastoma-related protein (1035 aa).

Residues 403–426 (ITSPLSPHRSPASHANGIPGSANS) are disordered. Residues 431–632 (TPVSTAMTTA…EKGSSLYNSL (202 aa)) are domain A. Positions 431-885 (TPVSTAMTTA…NEIFIPAAKP (455 aa)) are pocket. Residues 633 to 753 (TVARPALSAE…PGGGGETCAE (121 aa)) are spacer. Disordered stretches follow at residues 674 to 697 (PSLQKHETSPGSGQNGDLRSPKRP) and 721 to 748 (GNLKSKLPPPPLQSAFASPTRPNPGGGG). A domain B region spans residues 754-885 (TGINVFFTKI…NEIFIPAAKP (132 aa)).

It belongs to the retinoblastoma protein (RB) family.

The protein localises to the nucleus. Regulator of biological processes that recruits a histone deacetylase to control gene transcription. May play a role in the entry into mitosis, negatively regulating the cell proliferation. Formation of stable complexes with geminiviridae replication-associated proteins may create a cellular environment which favors viral DNA replication. The sequence is that of Retinoblastoma-related protein (RBL901) from Populus trichocarpa (Western balsam poplar).